The chain runs to 338 residues: Solute carrier family 35 member B1 homolog (338 aa).

Helical transmembrane passes span Phe9–Lys29, Leu53–Ile73, Gly84–Met104, Thr111–Gly131, Tyr135–Tyr155, Thr168–Val188, Leu213–Ile233, Leu244–Gly264, and Val284–Ala304. Residues Lys334 to Ser338 carry the Di-lysine motif motif.

Belongs to the nucleotide-sugar transporter family. SLC35B subfamily.

It localises to the endoplasmic reticulum membrane. Its function is as follows. Probable sugar transporter. The chain is Solute carrier family 35 member B1 homolog (meigo) from Drosophila melanogaster (Fruit fly).